A 657-amino-acid chain; its full sequence is Translation factor GUF1, mitochondrial (657 aa).

The transit peptide at 1–39 (MRGCLQSVKWLTSALRPSQSLASSTRYPRRLLSTSAPRN) directs the protein to the mitochondrion. Positions 59–239 (ERFRNFCIVA…TVIEQIPAPV (181 aa)) constitute a tr-type G domain. GTP contacts are provided by residues 121–128 (HQGEDYLL), 185–189 (INKVD), and 239–242 (VGDR).

Belongs to the TRAFAC class translation factor GTPase superfamily. Classic translation factor GTPase family. LepA subfamily.

Its subcellular location is the mitochondrion inner membrane. It carries out the reaction GTP + H2O = GDP + phosphate + H(+). In terms of biological role, promotes mitochondrial protein synthesis. May act as a fidelity factor of the translation reaction, by catalyzing a one-codon backward translocation of tRNAs on improperly translocated ribosomes. Binds to mitochondrial ribosomes in a GTP-dependent manner. This is Translation factor GUF1, mitochondrial from Ajellomyces capsulatus (strain H143) (Darling's disease fungus).